We begin with the raw amino-acid sequence, 157 residues long: Cyclic pyranopterin monophosphate synthase (157 aa).

Substrate-binding positions include 74–76 and 112–113; these read MCH and ME. Asp127 is an active-site residue.

This sequence belongs to the MoaC family. Homohexamer; trimer of dimers.

The catalysed reaction is (8S)-3',8-cyclo-7,8-dihydroguanosine 5'-triphosphate = cyclic pyranopterin phosphate + diphosphate. It functions in the pathway cofactor biosynthesis; molybdopterin biosynthesis. Catalyzes the conversion of (8S)-3',8-cyclo-7,8-dihydroguanosine 5'-triphosphate to cyclic pyranopterin monophosphate (cPMP). In Campylobacter lari (strain RM2100 / D67 / ATCC BAA-1060), this protein is Cyclic pyranopterin monophosphate synthase.